Here is a 157-residue protein sequence, read N- to C-terminus: Beta-defensin 125 (157 aa).

Positions 1–20 (MNLLMLTFIICGLLTQVTKG) are cleaved as a signal peptide. 3 disulfides stabilise this stretch: C27–C55, C35–C49, and C39–C56. The segment at 109–157 (GETITPETNTPETTMPPSETTSSKTTMPPSETATSETMPPPSQTALTHN) is disordered. A compositionally biased stretch (low complexity) spans 110 to 140 (ETITPETNTPETTMPPSETTSSKTTMPPSET). The span at 141–157 (ATSETMPPPSQTALTHN) shows a compositional bias: polar residues.

This sequence belongs to the beta-defensin family.

It localises to the secreted. Functionally, has antibacterial activity. This Pongo pygmaeus (Bornean orangutan) protein is Beta-defensin 125 (DEFB125).